Reading from the N-terminus, the 207-residue chain is Ribosomal RNA small subunit methyltransferase G (207 aa).

Residues G73, L78, 124–125, and R139 each bind S-adenosyl-L-methionine; that span reads VE.

It belongs to the methyltransferase superfamily. RNA methyltransferase RsmG family.

It localises to the cytoplasm. It carries out the reaction guanosine(527) in 16S rRNA + S-adenosyl-L-methionine = N(7)-methylguanosine(527) in 16S rRNA + S-adenosyl-L-homocysteine. In terms of biological role, specifically methylates the N7 position of guanine in position 527 of 16S rRNA. The protein is Ribosomal RNA small subunit methyltransferase G of Escherichia coli (strain SMS-3-5 / SECEC).